A 127-amino-acid polypeptide reads, in one-letter code: Fatty acid-binding protein, liver (127 aa).

M1 carries the post-translational modification N-acetylmethionine. Position 11 is a phosphoserine (S11). Residues K31 and K36 each carry the N6-succinyllysine modification. Phosphoserine is present on S39. K46 carries the N6-succinyllysine modification. T51 carries the phosphothreonine modification. The residue at position 56 (S56) is a Phosphoserine. N6-succinyllysine is present on residues K57, K78, and K90. S100 carries the phosphoserine modification. The residue at position 121 (K121) is an N6-succinyllysine.

Belongs to the calycin superfamily. Fatty-acid binding protein (FABP) family. Monomer.

Its subcellular location is the cytoplasm. Its function is as follows. Plays a role in lipoprotein-mediated cholesterol uptake in hepatocytes. Binds cholesterol. Binds free fatty acids and their coenzyme A derivatives, bilirubin, and some other small molecules in the cytoplasm. May be involved in intracellular lipid transport. In Sus scrofa (Pig), this protein is Fatty acid-binding protein, liver (FABP1).